Here is a 267-residue protein sequence, read N- to C-terminus: Nanos homolog 1 (267 aa).

The essential for its translational repressor activity stretch occupies residues 40-56; that stretch reads FSSWNDYLGLATLITRA. Residues 57 to 94 are disordered; that stretch reads SDRGSPHEGPGPTAAGPTMGPPEDDEDDDGEEPEAGGR. Over residues 78–90 the composition is skewed to acidic residues; that stretch reads PEDDEDDDGEEPE. A Nanos-type zinc finger spans residues 188-242; that stretch reads VCVFCRNNKEAVALYTTHILKGPDGRVLCPVLRRYTCPLCGASGDNAHTIKYCPL. Residues Cys189, Cys192, His205, Cys216, Cys224, Cys227, His235, and Cys240 each contribute to the Zn(2+) site. 2 consecutive short sequence motifs (C2HC) follow at residues 189 to 216 and 224 to 240; these read CVFC…RVLC and CPLC…IKYC. The interval 243–267 is disordered; that stretch reads SKVPPPTVRPPPRSNRDSLPSKKLR. The segment covering 244–255 has biased composition (pro residues); sequence KVPPPTVRPPPR. Residues 256–267 are compositionally biased toward basic and acidic residues; it reads SNRDSLPSKKLR.

It belongs to the nanos family. In terms of assembly, interacts with PUM2, SNAPIN and CTNNB1. Interacts (via N-terminal region) with CTNND1. Interacts with DDX20 (via N-terminal region). Expressed in the oocyte. Transiently expressed in eight-cell embryos. At 12.5 dpc, it is re-expressed in the central nervous system and the expression continues in the adult brain, in which the hippocampal formation is the predominant region. Expressed in the seminiferous tubules of mature testis, but not in the primordial germ cells.

It localises to the cytoplasm. It is found in the perinuclear region. Its function is as follows. May act as a translational repressor which regulates translation of specific mRNAs by forming a complex with PUM2 that associates with the 3'-UTR of mRNA targets. Capable of interfering with the proadhesive and anti-invasive functions of E-cadherin. Up-regulates the production of MMP14 to promote tumor cell invasion. Not essential for normal development. In Mus musculus (Mouse), this protein is Nanos homolog 1 (Nanos1).